We begin with the raw amino-acid sequence, 414 residues long: ORC1-type DNA replication protein 1 (414 aa).

Residues Thr-70 to Ala-74, Tyr-213, and Arg-225 contribute to the ATP site.

It belongs to the CDC6/cdc18 family.

Functionally, involved in regulation of DNA replication. This chain is ORC1-type DNA replication protein 1 (cdc6-1), found in Methanosarcina mazei (strain ATCC BAA-159 / DSM 3647 / Goe1 / Go1 / JCM 11833 / OCM 88) (Methanosarcina frisia).